The following is a 168-amino-acid chain: Regulatory protein RecX (168 aa).

The protein belongs to the RecX family.

It localises to the cytoplasm. Modulates RecA activity. The protein is Regulatory protein RecX of Serratia proteamaculans (strain 568).